Reading from the N-terminus, the 246-residue chain is tRNA pseudouridine synthase A (246 aa).

The active-site Nucleophile is D51. A substrate-binding site is contributed by Y105.

Belongs to the tRNA pseudouridine synthase TruA family.

It carries out the reaction uridine(38/39/40) in tRNA = pseudouridine(38/39/40) in tRNA. Its function is as follows. Formation of pseudouridine at positions 38, 39 and 40 in the anticodon stem and loop of transfer RNAs. In Thermoplasma volcanium (strain ATCC 51530 / DSM 4299 / JCM 9571 / NBRC 15438 / GSS1), this protein is tRNA pseudouridine synthase A.